Consider the following 379-residue polypeptide: V-type proton ATPase subunit S1 (379 aa).

Residues 1-17 (MLWKSLIALCVIGAAVA) form the signal peptide. Residues 18-333 (EQTPVFLWGA…WDCVGFVTPG (316 aa)) lie on the Lumenal side of the membrane. 2 N-linked (GlcNAc...) asparagine glycosylation sites follow: N225 and N284. C282 and C326 are oxidised to a cystine. A helical membrane pass occupies residues 334–354 (ILMGLFVVALLLVIMFVGVCW). The Cytoplasmic segment spans residues 355-379 (MMDINTMDRFDDPKGKTITINAAAE).

This sequence belongs to the vacuolar ATPase subunit S1 family. As to quaternary structure, accessory component of the multisubunit proton-transporting vacuolar (V)-ATPase protein pump. May interact with ATP6AP2.

It localises to the endoplasmic reticulum membrane. Its function is as follows. Accessory subunit of the proton-transporting vacuolar (V)-ATPase protein pump, which is required for luminal acidification of secretory vesicles. This Drosophila melanogaster (Fruit fly) protein is V-type proton ATPase subunit S1.